A 327-amino-acid polypeptide reads, in one-letter code: BarH-like 1 homeobox protein (327 aa).

Disordered regions lie at residues 1–90 (MEGS…AQSR), 113–181 (PYSS…PRKA), and 303–327 (LQGASEPPPPLPPLPGVLPRAAQPR). Over residues 33–54 (RSPLELSPRSESSSDCSSPASP) the composition is skewed to low complexity. Positions 79-90 (QPGQLSAPAQSR) are enriched in polar residues. Basic and acidic residues-rich tracts occupy residues 133 to 143 (AGEDFRDKLDK) and 152 to 166 (SEYKVKEEGDREISS). Positions 178 to 237 (PRKARTAFTDHQLAQLERSFERQKYLSVQDRMELAASLNLTDTQVKTWYQNRRTKWKRQT) form a DNA-binding region, homeobox. Residues 308 to 318 (EPPPPLPPLPG) are compositionally biased toward pro residues.

The protein belongs to the BAR homeobox family.

Its subcellular location is the nucleus. In Mus musculus (Mouse), this protein is BarH-like 1 homeobox protein (Barhl1).